The following is a 204-amino-acid chain: Large ribosomal subunit protein eL15 (204 aa).

The protein belongs to the eukaryotic ribosomal protein eL15 family. As to quaternary structure, component of the large ribosomal subunit.

Its subcellular location is the cytoplasm. In terms of biological role, component of the large ribosomal subunit. The ribosome is a large ribonucleoprotein complex responsible for the synthesis of proteins in the cell. The chain is Large ribosomal subunit protein eL15 (rpl15) from Monopterus albus (Swamp eel).